A 677-amino-acid polypeptide reads, in one-letter code: Pentatricopeptide repeat-containing protein At5g39350 (677 aa).

PPR repeat units follow at residues 48–78 (SGHILSTLSVTYALCGHITYARKLFEEMPQS), 79–113 (SLLSYNIVIRMYVREGLYHDAISVFIRMVSEGVKC), 116–146 (DGYTYPFVAKAAGELKSMKLGLVVHGRILRS), 151–181 (DKYVQNALLAMYMNFGKVEMARDVFDVMKNR), 182–216 (DVISWNTMISGYYRNGYMNDALMMFDWMVNESVDL), 217–251 (DHATIVSMLPVCGHLKDLEMGRNVHKLVEEKRLGD), 252–282 (KIEVKNALVNMYLKCGRMDEARFVFDRMERR), 283–317 (DVITWTCMINGYTEDGDVENALELCRLMQFEGVRP), 318–352 (NAVTIASLVSVCGDALKVNDGKCLHGWAVRQQVYS), 353–383 (DIIIETSLISMYAKCKRVDLCFRVFSGASKY), 384–418 (HTGPWSAIIAGCVQNELVSDALGLFKRMRREDVEP), 419–453 (NIATLNSLLPAYAALADLRQAMNIHCYLTKTGFMS), 454–488 (SLDAATGLVHVYSKCGTLESAHKIFNGIQEKHKSK), 489–523 (DVVLWGALISGYGMHGDGHNALQVFMEMVRSGVTP), 524–554 (NEITFTSALNACSHSGLVEEGLTLFRFMLEH), and 560–590 (RSNHYTCIVDLLGRAGRLDEAYNLITTIPFE). A type E motif region spans residues 595–670 (VWGALLAACV…KPGHSTIEIR (76 aa)).

This sequence belongs to the PPR family. PCMP-E subfamily.

In Arabidopsis thaliana (Mouse-ear cress), this protein is Pentatricopeptide repeat-containing protein At5g39350 (PCMP-E16).